Consider the following 615-residue polypeptide: MDMDRGFYRKVDVPDHAHYVIAFFVLIIGVVGVTGNALVMYAFLCNKKLRTPPNYFIMNLAVSDFLMAITQSPIFFINSLFKEWIFGETGCRMYAFCGALFGITSMINLLAISLDRYIVITKPPQAIRWVSGRRTMVVILLVWLYSLAWSLAPLLGWSSYIPEGLMTSCTWDYVTSTPANKGYTLMLCCFVFFIPLGIISYCYLCMFLAIRSAGREIERLGTQVRKSTLMQQQTIKTEWKLTKVAFVVIIVYVHSWSPYACVTLIAWAGYGSHLSPYSKAVPAVIAKASAIYNPFIYAIIHSKYRDTLAEHVPCLYFLRQPPRKVSMSRAQSECSFRDSMVSRQSSASKTKFHRVSSTSTADTQVWSDVELDPMNHEGQSLRTSHSLGVLGRSKEHRGPPAQQNRQTRSSDTLEQATVADWRPPLTALRCDRNFLPQPTHPPYKMAAATPLQATTVDNVTPEHWNKHPNNNHKNHNNRHNGNNNNEEHEYSGKGGRHCQNHPHHIDVKNSISNCKKTCEKDTFSKEPVPCNAADDVRFSPRSAHTIQHAMGTPFRYMPEGDIACQERLSTDRSQRGDPLPDSKSLNCTGDVPVSAQRCSFPHETSRNLEESFMAL.

Topologically, residues Met-1–Tyr-19 are extracellular. Residues Val-20–Met-40 form a helical membrane-spanning segment. Topologically, residues Tyr-41 to Phe-56 are cytoplasmic. The helical transmembrane segment at Ile-57–Ile-77 threads the bilayer. Residues Asn-78–Met-93 lie on the Extracellular side of the membrane. Residues Cys-91 and Cys-169 are joined by a disulfide bond. A helical membrane pass occupies residues Tyr-94–Leu-114. Residues Asp-115 to Met-136 are Cytoplasmic-facing. The helical transmembrane segment at Val-137–Trp-157 threads the bilayer. Residues Ser-158–Cys-189 are Extracellular-facing. A helical membrane pass occupies residues Phe-190–Ile-210. At Arg-211–Val-244 the chain is on the cytoplasmic side. A helical membrane pass occupies residues Ala-245–Ile-265. At Ala-266–Lys-279 the chain is on the extracellular side. Residues Ala-280 to Ile-300 form a helical membrane-spanning segment. Lys-287 is modified (N6-(retinylidene)lysine). Residues His-301 to Leu-615 lie on the Cytoplasmic side of the membrane. Disordered regions lie at residues Leu-390–Asp-420 and Asn-465–Pro-502. Residues Ala-401 to Gln-415 are compositionally biased toward polar residues. Over residues Asn-469–Arg-478 the composition is skewed to basic residues.

Belongs to the G-protein coupled receptor 1 family. Opsin subfamily. Expressed in the inner nuclear layer of the retina, possibly in amacrine and ganglion cells. Expressed in a subpopulation of neurons in the dorsal habenula.

The protein resides in the cell membrane. Its function is as follows. Photoreceptor implicated in non-image-forming responses to light. This chain is Melanopsin-B (opn4b), found in Gadus morhua (Atlantic cod).